Reading from the N-terminus, the 609-residue chain is Glutamine--fructose-6-phosphate aminotransferase [isomerizing] (609 aa).

C2 acts as the Nucleophile; for GATase activity in catalysis. The 216-residue stretch at 2 to 217 folds into the Glutamine amidotransferase type-2 domain; that stretch reads CGIVGAIAGR…EGDTAELRRD (216 aa). 2 consecutive SIS domains span residues 284 to 425 and 458 to 599; these read TADA…LQGR and WAER…VDKP. The active-site For Fru-6P isomerization activity is the K604.

Homodimer.

It localises to the cytoplasm. The enzyme catalyses D-fructose 6-phosphate + L-glutamine = D-glucosamine 6-phosphate + L-glutamate. Catalyzes the first step in hexosamine metabolism, converting fructose-6P into glucosamine-6P using glutamine as a nitrogen source. The polypeptide is Glutamine--fructose-6-phosphate aminotransferase [isomerizing] (Xanthomonas campestris pv. campestris (strain ATCC 33913 / DSM 3586 / NCPPB 528 / LMG 568 / P 25)).